Here is an 804-residue protein sequence, read N- to C-terminus: Ribonucleoside-diphosphate reductase large subunit-like protein (804 aa).

Belongs to the ribonucleoside diphosphate reductase large chain family.

The protein resides in the virion. Its subcellular location is the host cytoplasm. Functionally, does not possess a ribonucleotide reductase activity. Betaherpesviruses probably use another strategy to expand the dNTP pool in a quiescent host cell. The polypeptide is Ribonucleoside-diphosphate reductase large subunit-like protein (Homo sapiens (Human)).